A 984-amino-acid chain; its full sequence is Putative formate dehydrogenase SAR2393 (984 aa).

Positions 3–79 (EHLVVTLDGK…PMTVNTVNND (77 aa)) constitute a 2Fe-2S ferredoxin-type domain. [2Fe-2S] cluster is bound by residues Cys-37, Cys-48, Cys-51, and Cys-63. The 4Fe-4S His(Cys)3-ligated-type domain maps to 79–119 (DVKDAQKEALDRILEKHMLYCTVCDYNNGDCEIHNTMDAWG). [4Fe-4S] cluster-binding residues include His-95, Cys-99, Cys-102, Cys-109, Cys-147, Cys-150, Cys-153, Cys-157, Cys-190, Cys-193, Cys-196, Cys-200, Cys-264, Cys-267, Cys-271, and Cys-299. 2 4Fe-4S ferredoxin-type domains span residues 138-165 (PFYR…LNET) and 181-211 (NDVP…VNME). The segment at 252–984 (MRKERIKKTK…YVFPGNQVDK (733 aa)) is formate dehydrogenase. Positions 257 to 313 (IKKTKTVCTYCGVGCSFEVWTKDREILKVQPSHDSPANKIATCVKGKFSWGHINSDQ) constitute a 4Fe-4S Mo/W bis-MGD-type domain.

This sequence in the C-terminal section; belongs to the prokaryotic molybdopterin-containing oxidoreductase family. The cofactor is [2Fe-2S] cluster. It depends on [4Fe-4S] cluster as a cofactor. Requires Mo-bis(molybdopterin guanine dinucleotide) as cofactor.

It carries out the reaction formate + NAD(+) = CO2 + NADH. In Staphylococcus aureus (strain MRSA252), this protein is Putative formate dehydrogenase SAR2393.